A 485-amino-acid polypeptide reads, in one-letter code: Glutamyl-tRNA(Gln) amidotransferase subunit A (485 aa).

Active-site charge relay system residues include Lys-79 and Ser-154. Residue Ser-178 is the Acyl-ester intermediate of the active site.

The protein belongs to the amidase family. GatA subfamily. In terms of assembly, heterotrimer of A, B and C subunits.

It carries out the reaction L-glutamyl-tRNA(Gln) + L-glutamine + ATP + H2O = L-glutaminyl-tRNA(Gln) + L-glutamate + ADP + phosphate + H(+). In terms of biological role, allows the formation of correctly charged Gln-tRNA(Gln) through the transamidation of misacylated Glu-tRNA(Gln) in organisms which lack glutaminyl-tRNA synthetase. The reaction takes place in the presence of glutamine and ATP through an activated gamma-phospho-Glu-tRNA(Gln). The polypeptide is Glutamyl-tRNA(Gln) amidotransferase subunit A (Clostridium botulinum (strain Langeland / NCTC 10281 / Type F)).